Consider the following 803-residue polypeptide: Nuclear factor of activated T-cells, cytoplasmic 1 (803 aa).

A calcineurin-binding region spans residues 101 to 106 (PRIEIT). The interval 109-199 (LGLHHNSSQF…CVSPKTTDPE (91 aa)) is transactivation domain A (TAD-A). Residues 181-195 (PQTSPWQSPCVSPKT) show a composition bias toward polar residues. Residues 181–279 (PQTSPWQSPC…GSPRVSVTDD (99 aa)) form a disordered region. 2 consecutive repeat copies span residues 184-200 (SPWQ…DPEE) and 214-230 (SPRH…VTEE). A 3 X SP repeats region spans residues 184-279 (SPWQSPCVSP…GSPRVSVTDD (96 aa)). Ser214 and Ser218 each carry phosphoserine. Over residues 214 to 231 (SPRHSPSTSPRTSVTEES) the composition is skewed to low complexity. Ser226 bears the Phosphoserine; by PKA mark. The Nuclear localization signal motif lies at 246-248 (KRK). The stretch at 263–279 (SPTPSPQGSPRVSVTDD) is repeat 3. Ser275 carries the phosphoserine; by PKA modification. The Nuclear export signal motif lies at 291-302 (SAIVAAINALST). An RHD domain is found at 389–571 (PSLPALDWQL…NPIECSQRSA (183 aa)). Residues 418–425 (RAHYETEG) mediate DNA binding. The Nuclear localization signal signature appears at 661 to 663 (KRK). Residues 723–803 (LMPGFPPRPQ…QPQVSPTSSG (81 aa)) are disordered. Positions 778–792 (SGVPPGPPQPPPPTL) are enriched in pro residues. The span at 793-803 (LQPQVSPTSSG) shows a compositional bias: low complexity.

As to quaternary structure, member of the multicomponent NFATC transcription complex that consists of at least two components, a pre-existing cytoplasmic component NFATC2 and an inducible nuclear component NFATC1. Other members such as NFATC4, NFATC3 or members of the activating protein-1 family, MAF, GATA4 and Cbp/p300 can also bind the complex. NFATC proteins bind to DNA as monomers. Interacts with HOMER2 and HOMER3; this interaction may compete with calcineurin/PPP3CA-binding and hence prevent NFATC1 dephosphorylation and activation. Interacts with TLE6/GRG6. Phosphorylated by NFATC-kinase and GSK3B; phosphorylation induces NFATC1 nuclear exit and dephosphorylation by calcineurin promotes nuclear import. Phosphorylation by PKA and DYRK2 negatively modulates nuclear accumulation, and promotes subsequent phosphorylation by GSK3B or casein kinase 1.

It localises to the cytoplasm. Its subcellular location is the nucleus. Plays a role in the inducible expression of cytokine genes in T-cells, especially in the induction of the IL-2 or IL-4 gene transcription. Also controls gene expression in embryonic cardiac cells. Could regulate not only the activation and proliferation but also the differentiation and programmed death of T-lymphocytes as well as lymphoid and non-lymphoid cells. Required for osteoclastogenesis and regulates many genes important for osteoclast differentiation and function. This chain is Nuclear factor of activated T-cells, cytoplasmic 1, found in Bos taurus (Bovine).